The sequence spans 278 residues: Acetyl-coenzyme A carboxylase carboxyl transferase subunit beta (278 aa).

A CoA carboxyltransferase N-terminal domain is found at 23-278 (LWSKCDSCGA…QLIKLLGHMK (256 aa)). Residues C27, C30, C46, and C49 each coordinate Zn(2+). The C4-type zinc finger occupies 27-49 (CDSCGAALHKKQLEDHLYTCPHC).

This sequence belongs to the AccD/PCCB family. As to quaternary structure, acetyl-CoA carboxylase is a heterohexamer composed of biotin carboxyl carrier protein (AccB), biotin carboxylase (AccC) and two subunits each of ACCase subunit alpha (AccA) and ACCase subunit beta (AccD). Zn(2+) is required as a cofactor.

It localises to the cytoplasm. It carries out the reaction N(6)-carboxybiotinyl-L-lysyl-[protein] + acetyl-CoA = N(6)-biotinyl-L-lysyl-[protein] + malonyl-CoA. It functions in the pathway lipid metabolism; malonyl-CoA biosynthesis; malonyl-CoA from acetyl-CoA: step 1/1. Its function is as follows. Component of the acetyl coenzyme A carboxylase (ACC) complex. Biotin carboxylase (BC) catalyzes the carboxylation of biotin on its carrier protein (BCCP) and then the CO(2) group is transferred by the transcarboxylase to acetyl-CoA to form malonyl-CoA. The chain is Acetyl-coenzyme A carboxylase carboxyl transferase subunit beta from Chlorobaculum tepidum (strain ATCC 49652 / DSM 12025 / NBRC 103806 / TLS) (Chlorobium tepidum).